A 244-amino-acid polypeptide reads, in one-letter code: Salivary antigen-5 (244 aa).

The signal sequence occupies residues 1-23; that stretch reads MAKAHSSLVFCLLALALVRFAQA. The region spanning 46 to 202 is the SCP domain; the sequence is LDFHNKFREL…WYTGYLVCNY (157 aa). Asn106 and Asn172 each carry an N-linked (GlcNAc...) asparagine glycan.

It belongs to the CRISP family. Venom allergen 5-like subfamily. In terms of tissue distribution, salivary gland (at protein level).

The protein localises to the secreted. In terms of biological role, inhibits host platelet aggregation induced by low doses of collagen. The polypeptide is Salivary antigen-5 (Triatoma infestans (Assassin bug)).